The sequence spans 137 residues: Fatty acid-binding protein homolog 8 (137 aa).

Positions 24-34 (KEIGVGLLIRK) match the Nuclear localization signal motif.

The protein belongs to the calycin superfamily. Fatty-acid binding protein (FABP) family. In terms of assembly, monomer. As to expression, intestine.

The protein resides in the lysosome. It localises to the nucleus. Lysosomal lipid chaperone which binds to a wide range of unsaturated fatty acids, including high affinity binding to oleic acid and oleoylethanolamide, to transport them into the nucleus. As part of a lysosome-to-nucleus retrograde lipid signaling pathway, translocates into the nucleus where it activates the transcription of genes promoting longevity and activation of mitochondrial beta oxidation. This Caenorhabditis elegans protein is Fatty acid-binding protein homolog 8.